A 316-amino-acid chain; its full sequence is 4-hydroxy-3-methylbut-2-enyl diphosphate reductase (316 aa).

Cysteine 12 contributes to the [4Fe-4S] cluster binding site. Positions 43 and 81 each coordinate (2E)-4-hydroxy-3-methylbut-2-enyl diphosphate. Dimethylallyl diphosphate-binding residues include histidine 43 and histidine 81. 2 residues coordinate isopentenyl diphosphate: histidine 43 and histidine 81. Cysteine 103 provides a ligand contact to [4Fe-4S] cluster. A (2E)-4-hydroxy-3-methylbut-2-enyl diphosphate-binding site is contributed by histidine 131. Histidine 131 is a binding site for dimethylallyl diphosphate. Histidine 131 contributes to the isopentenyl diphosphate binding site. The active-site Proton donor is the glutamate 133. Threonine 170 provides a ligand contact to (2E)-4-hydroxy-3-methylbut-2-enyl diphosphate. Residue cysteine 198 participates in [4Fe-4S] cluster binding. (2E)-4-hydroxy-3-methylbut-2-enyl diphosphate-binding residues include serine 226, asparagine 228, and serine 271. The dimethylallyl diphosphate site is built by serine 226, asparagine 228, and serine 271. Serine 226, asparagine 228, and serine 271 together coordinate isopentenyl diphosphate.

The protein belongs to the IspH family. [4Fe-4S] cluster serves as cofactor.

The catalysed reaction is isopentenyl diphosphate + 2 oxidized [2Fe-2S]-[ferredoxin] + H2O = (2E)-4-hydroxy-3-methylbut-2-enyl diphosphate + 2 reduced [2Fe-2S]-[ferredoxin] + 2 H(+). It carries out the reaction dimethylallyl diphosphate + 2 oxidized [2Fe-2S]-[ferredoxin] + H2O = (2E)-4-hydroxy-3-methylbut-2-enyl diphosphate + 2 reduced [2Fe-2S]-[ferredoxin] + 2 H(+). It participates in isoprenoid biosynthesis; dimethylallyl diphosphate biosynthesis; dimethylallyl diphosphate from (2E)-4-hydroxy-3-methylbutenyl diphosphate: step 1/1. It functions in the pathway isoprenoid biosynthesis; isopentenyl diphosphate biosynthesis via DXP pathway; isopentenyl diphosphate from 1-deoxy-D-xylulose 5-phosphate: step 6/6. In terms of biological role, catalyzes the conversion of 1-hydroxy-2-methyl-2-(E)-butenyl 4-diphosphate (HMBPP) into a mixture of isopentenyl diphosphate (IPP) and dimethylallyl diphosphate (DMAPP). Acts in the terminal step of the DOXP/MEP pathway for isoprenoid precursor biosynthesis. This is 4-hydroxy-3-methylbut-2-enyl diphosphate reductase from Geobacillus kaustophilus (strain HTA426).